We begin with the raw amino-acid sequence, 119 residues long: Basic phospholipase A2 homolog 1 (119 aa).

7 cysteine pairs are disulfide-bonded: cysteine 11–cysteine 72, cysteine 27–cysteine 118, cysteine 29–cysteine 45, cysteine 44–cysteine 99, cysteine 51–cysteine 92, cysteine 61–cysteine 85, and cysteine 79–cysteine 90. The important for membrane-damaging activities in eukaryotes and bacteria; heparin-binding stretch occupies residues 107–117; the sequence is KENYNIDPKKR.

The protein belongs to the phospholipase A2 family. Group I subfamily. D49 sub-subfamily. Expressed by the venom gland.

It is found in the secreted. In Notechis scutatus scutatus (Mainland tiger snake), this protein is Basic phospholipase A2 homolog 1.